The chain runs to 548 residues: SH2B adapter protein 3 (548 aa).

The segment covering 1–11 (MNEPTVQPSRT) has biased composition (polar residues). Disordered stretches follow at residues 1-25 (MNEP…RGWS), 78-108 (SLAG…DLGP), and 128-160 (RSAG…LLPW). A compositionally biased stretch (low complexity) spans 12 to 21 (SSAPASPASP). A phosphoserine mark is found at Ser-13, Ser-102, and Ser-129. Residues 137-148 (TSDTNDIDTTAA) show a composition bias toward polar residues. One can recognise a PH domain in the interval 168-279 (EALKEVVLRY…WLAELRASTG (112 aa)). The tract at residues 290-313 (PLSLAAEPGPARSPRGSTDSLDQG) is disordered. Ser-302 carries the phosphoserine modification. One can recognise an SH2 domain in the interval 336–434 (WFHGPISRVR…ACDVRLSGYV (99 aa)).

The protein belongs to the SH2B adapter family. Post-translationally, tyrosine phosphorylated.

Functionally, links T-cell receptor activation signal to phospholipase C-gamma-1, GRB2 and phosphatidylinositol 3-kinase. This chain is SH2B adapter protein 3 (Sh2b3), found in Mus musculus (Mouse).